The sequence spans 134 residues: Phosphoribosyl-AMP cyclohydrolase (134 aa).

Aspartate 80 lines the Mg(2+) pocket. Cysteine 81 provides a ligand contact to Zn(2+). Positions 82 and 84 each coordinate Mg(2+). 2 residues coordinate Zn(2+): cysteine 98 and cysteine 105.

This sequence belongs to the PRA-CH family. Homodimer. Requires Mg(2+) as cofactor. The cofactor is Zn(2+).

The protein localises to the cytoplasm. It catalyses the reaction 1-(5-phospho-beta-D-ribosyl)-5'-AMP + H2O = 1-(5-phospho-beta-D-ribosyl)-5-[(5-phospho-beta-D-ribosylamino)methylideneamino]imidazole-4-carboxamide. It participates in amino-acid biosynthesis; L-histidine biosynthesis; L-histidine from 5-phospho-alpha-D-ribose 1-diphosphate: step 3/9. In terms of biological role, catalyzes the hydrolysis of the adenine ring of phosphoribosyl-AMP. This is Phosphoribosyl-AMP cyclohydrolase from Herminiimonas arsenicoxydans.